The following is a 310-amino-acid chain: Nitric oxide synthase-interacting protein homolog (310 aa).

The segment covering 115–124 (FSAIESTPSR) has biased composition (polar residues). Residues 115-141 (FSAIESTPSRTGAVATPRPEVGSLKRQ) are disordered.

Belongs to the NOSIP family.

Its subcellular location is the cytoplasm. It localises to the nucleus. Functionally, negatively regulates nitric oxide production by inducing nitric oxide synthase translocation to actin cytoskeleton and inhibiting its enzymatic activity. The chain is Nitric oxide synthase-interacting protein homolog from Caenorhabditis elegans.